The chain runs to 467 residues: Glutamate--tRNA ligase (467 aa).

The 'HIGH' region motif lies at 9 to 19; that stretch reads PSPTGYLHIGG. The short motif at 237 to 241 is the 'KMSKS' region element; that stretch reads KLSKR. Lys-240 contributes to the ATP binding site.

Belongs to the class-I aminoacyl-tRNA synthetase family. Glutamate--tRNA ligase type 1 subfamily. In terms of assembly, monomer.

The protein resides in the cytoplasm. The enzyme catalyses tRNA(Glu) + L-glutamate + ATP = L-glutamyl-tRNA(Glu) + AMP + diphosphate. In terms of biological role, catalyzes the attachment of glutamate to tRNA(Glu) in a two-step reaction: glutamate is first activated by ATP to form Glu-AMP and then transferred to the acceptor end of tRNA(Glu). The protein is Glutamate--tRNA ligase of Xylella fastidiosa (strain M12).